A 447-amino-acid chain; its full sequence is Glutamate--tRNA ligase 2 (447 aa).

A 'HIGH' region motif is present at residues P9 to N19. Residues G240 to R244 carry the 'KMSKS' region motif. Residue K243 coordinates ATP.

Belongs to the class-I aminoacyl-tRNA synthetase family. Glutamate--tRNA ligase type 1 subfamily. As to quaternary structure, monomer.

It localises to the cytoplasm. It catalyses the reaction tRNA(Glu) + L-glutamate + ATP = L-glutamyl-tRNA(Glu) + AMP + diphosphate. In terms of biological role, catalyzes the attachment of glutamate to tRNA(Glu) in a two-step reaction: glutamate is first activated by ATP to form Glu-AMP and then transferred to the acceptor end of tRNA(Glu). The sequence is that of Glutamate--tRNA ligase 2 from Methylobacterium sp. (strain 4-46).